Consider the following 139-residue polypeptide: Holo-[acyl-carrier-protein] synthase (139 aa).

Mg(2+)-binding residues include aspartate 8 and glutamate 57.

The protein belongs to the P-Pant transferase superfamily. AcpS family. It depends on Mg(2+) as a cofactor.

It is found in the cytoplasm. The enzyme catalyses apo-[ACP] + CoA = holo-[ACP] + adenosine 3',5'-bisphosphate + H(+). Its function is as follows. Transfers the 4'-phosphopantetheine moiety from coenzyme A to a Ser of acyl-carrier-protein. This chain is Holo-[acyl-carrier-protein] synthase, found in Sinorhizobium fredii (strain NBRC 101917 / NGR234).